A 330-amino-acid chain; its full sequence is Urokinase plasminogen activator surface receptor (330 aa).

An N-terminal signal peptide occupies residues 1-20 (MGQPLLLLLLVYTYIPGSWG). 3 UPAR/Ly6 domains span residues 21–112 (LRCL…RNRY), 113–208 (LECA…PPNG), and 209–300 (LQCY…PGKG). 3 cysteine pairs are disulfide-bonded: cysteine 23/cysteine 44, cysteine 26/cysteine 32, and cysteine 37/cysteine 65. N-linked (GlcNAc...) asparagine glycosylation is present at asparagine 28. N-linked (GlcNAc...) asparagine glycosylation is present at asparagine 72. Intrachain disulfides connect cysteine 91–cysteine 96, cysteine 115–cysteine 142, cysteine 118–cysteine 125, cysteine 135–cysteine 164, cysteine 170–cysteine 187, cysteine 188–cysteine 193, cysteine 211–cysteine 239, cysteine 214–cysteine 222, cysteine 232–cysteine 258, cysteine 264–cysteine 282, and cysteine 283–cysteine 288. 2 N-linked (GlcNAc...) asparagine glycosylation sites follow: asparagine 179 and asparagine 189. N-linked (GlcNAc...) asparagine glycosylation is present at asparagine 279. Glycine 300 carries the GPI-anchor amidated glycine lipid modification. The propeptide at 301 to 330 (GAPKTSPAHLSFFVSLLLTARLWGATLLCT) is removed in mature form.

As to quaternary structure, monomer. Interacts (via the UPAR/Ly6 domains) with SRPX2. Interacts with MRC2. Interacts with SORL1 (via N-terminal ectodomain); this interaction decreases PLAUR internalization. The ternary complex composed of PLAUR-PLAU-SERPINE1 also interacts with SORL1. Interacts with CD82; this interaction prevents PLAUR from binding to its high affinity ligand PLAU.

The protein resides in the cell membrane. Functionally, acts as a receptor for urokinase plasminogen activator. Plays a role in localizing and promoting plasmin formation. Mediates the proteolysis-independent signal transduction activation effects of U-PA. This Bos taurus (Bovine) protein is Urokinase plasminogen activator surface receptor (PLAUR).